Reading from the N-terminus, the 241-residue chain is Triosephosphate isomerase (241 aa).

9–11 (NWK) is a binding site for substrate. The Electrophile role is filled by His-96. The Proton acceptor role is filled by Glu-165. Substrate contacts are provided by residues Gly-171, Ser-204, and 225 to 226 (GG).

This sequence belongs to the triosephosphate isomerase family. In terms of assembly, homodimer.

It is found in the cytoplasm. It carries out the reaction D-glyceraldehyde 3-phosphate = dihydroxyacetone phosphate. It functions in the pathway carbohydrate biosynthesis; gluconeogenesis. The protein operates within carbohydrate degradation; glycolysis; D-glyceraldehyde 3-phosphate from glycerone phosphate: step 1/1. Its function is as follows. Involved in the gluconeogenesis. Catalyzes stereospecifically the conversion of dihydroxyacetone phosphate (DHAP) to D-glyceraldehyde-3-phosphate (G3P). This Prochlorococcus marinus (strain MIT 9312) protein is Triosephosphate isomerase.